The sequence spans 256 residues: MVLISVLASLLVLQLSYAQKSSELVIGGAECNINEHRSLVLLYNSSRLFGGGTLINKEWVLSAAHCDGENMKIYLGLHHFRLPNKDRQIRVAKEKYFCRDRKSIVDKDIMLIKLNKPVNNSTHIAPLSLPSSPPSVGSDCRIMGWGTITSPNDTYPKVPHCANINILEHSLCERAYNDLSASSRTLCAGIEKGGIDTCKGDSGGPLICNGQIQGIVSWGDEVCGKPNKPGVYTKVFDYTDWIRNIIAGNTAATCPQ.

Positions 1–18 (MVLISVLASLLVLQLSYA) are cleaved as a signal peptide. The propeptide occupies 19–24 (QKSSEL). The 223-residue stretch at 25-247 (VIGGAECNIN…YTDWIRNIIA (223 aa)) folds into the Peptidase S1 domain. Cystine bridges form between Cys31–Cys161, Cys98–Cys254, Cys140–Cys208, Cys172–Cys187, and Cys198–Cys223. Residue Asn44 is glycosylated (N-linked (GlcNAc...) asparagine). Catalysis depends on charge relay system residues His65 and Asp108. 3 N-linked (GlcNAc...) asparagine glycosylation sites follow: Asn119, Asn120, and Asn152. Residue Ser202 is the Charge relay system of the active site.

Belongs to the peptidase S1 family. Snake venom subfamily. In terms of assembly, monomer. In terms of tissue distribution, expressed by the venom gland.

The protein localises to the secreted. Its activity is regulated as follows. Its platelets aggregating activity is inhibited by chlorpromazine, theophylline mepacrine. Its platelet aggregating activity and its amidolytic activity are inhibited by PMSF, TPCK, TLCK and soybean trypsin inhibitors. Is unaffected by hirudin or by antithrombin-III in the presence of heparin. Functionally, thrombin-like snake venom serine protease which potently induces platelet aggregation and has fibrinogenolytic activities. Clots purified fibrinogen and hydrolyzes alpha-chains (FGA). High concentrations of this enzyme also cleave prothrombin (F2) and factor X (F10). Is also able to activate factor XIII (F8). This Cerastes cerastes (Horned desert viper) protein is Thrombin-like enzyme cerastocytin.